A 519-amino-acid polypeptide reads, in one-letter code: Ion-translocating oxidoreductase complex subunit C (519 aa).

2 consecutive 4Fe-4S ferredoxin-type domains span residues 372–401 (ETPEAKTMPCIRCGRCVQGCPVGLTPFELN) and 411–440 (GAAKVGLMDCLACGCCSYNCPANLPLVQSF). 8 residues coordinate [4Fe-4S] cluster: Cys381, Cys384, Cys387, Cys391, Cys420, Cys423, Cys426, and Cys430. The segment at 494–519 (KAEEAAAAAAMPPPATATAIQGEATP) is disordered.

It belongs to the 4Fe4S bacterial-type ferredoxin family. RnfC subfamily. In terms of assembly, the complex is composed of six subunits: RnfA, RnfB, RnfC, RnfD, RnfE and RnfG. [4Fe-4S] cluster is required as a cofactor.

Its subcellular location is the cellular chromatophore membrane. Its function is as follows. Part of a membrane-bound complex that couples electron transfer with translocation of ions across the membrane. Required for nitrogen fixation. Involved in electron transfer to nitrogenase. In Rhodobacter capsulatus (Rhodopseudomonas capsulata), this protein is Ion-translocating oxidoreductase complex subunit C.